We begin with the raw amino-acid sequence, 139 residues long: Myosin light chain kinase, smooth muscle (139 aa).

The segment at 48–97 (APTGENAKAPEMKARRPKSSLPPVLGTESDATVKKKPAPKTPPKAAMPPQ) is disordered.

The protein belongs to the protein kinase superfamily. CAMK Ser/Thr protein kinase family. As to quaternary structure, interacts with SVIL. The C-terminus is deglutamylated by AGTPBP1/CCP1, AGBL1/CCP4 and AGBL4/CCP6, leading to the formation of Myosin light chain kinase, smooth muscle, deglutamylated form. The consequences of C-terminal deglutamylation are unknown.

It catalyses the reaction L-seryl-[myosin light chain] + ATP = O-phospho-L-seryl-[myosin light chain] + ADP + H(+). It carries out the reaction L-threonyl-[myosin light chain] + ATP = O-phospho-L-threonyl-[myosin light chain] + ADP + H(+). Phosphorylates a specific serine in the N-terminus of a myosin light chain. Also regulates actin-myosin interaction through a non-kinase activity. The polypeptide is Myosin light chain kinase, smooth muscle (MYLK) (Sus scrofa (Pig)).